Consider the following 298-residue polypeptide: Lipoyl synthase (298 aa).

7 residues coordinate [4Fe-4S] cluster: Cys40, Cys45, Cys51, Cys67, Cys71, Cys74, and Ser280. The region spanning 53-269 is the Radical SAM core domain; sequence AVRKTATFMI…KEIALSKGFS (217 aa).

This sequence belongs to the radical SAM superfamily. Lipoyl synthase family. [4Fe-4S] cluster serves as cofactor.

Its subcellular location is the cytoplasm. It catalyses the reaction [[Fe-S] cluster scaffold protein carrying a second [4Fe-4S](2+) cluster] + N(6)-octanoyl-L-lysyl-[protein] + 2 oxidized [2Fe-2S]-[ferredoxin] + 2 S-adenosyl-L-methionine + 4 H(+) = [[Fe-S] cluster scaffold protein] + N(6)-[(R)-dihydrolipoyl]-L-lysyl-[protein] + 4 Fe(3+) + 2 hydrogen sulfide + 2 5'-deoxyadenosine + 2 L-methionine + 2 reduced [2Fe-2S]-[ferredoxin]. It functions in the pathway protein modification; protein lipoylation via endogenous pathway; protein N(6)-(lipoyl)lysine from octanoyl-[acyl-carrier-protein]. Its function is as follows. Catalyzes the radical-mediated insertion of two sulfur atoms into the C-6 and C-8 positions of the octanoyl moiety bound to the lipoyl domains of lipoate-dependent enzymes, thereby converting the octanoylated domains into lipoylated derivatives. The protein is Lipoyl synthase of Bacillus cereus (strain ATCC 10987 / NRS 248).